We begin with the raw amino-acid sequence, 550 residues long: Chaperonin GroEL (550 aa).

Residues T29–P32, K50, D86–T90, G417, and D499 each bind ATP.

This sequence belongs to the chaperonin (HSP60) family. In terms of assembly, forms a cylinder of 14 subunits composed of two heptameric rings stacked back-to-back. Interacts with the co-chaperonin GroES.

The protein localises to the cytoplasm. It carries out the reaction ATP + H2O + a folded polypeptide = ADP + phosphate + an unfolded polypeptide.. Functionally, together with its co-chaperonin GroES, plays an essential role in assisting protein folding. The GroEL-GroES system forms a nano-cage that allows encapsulation of the non-native substrate proteins and provides a physical environment optimized to promote and accelerate protein folding. The sequence is that of Chaperonin GroEL from Ehrlichia chaffeensis.